The chain runs to 937 residues: Hyphally-regulated protein (937 aa).

Residues 1–20 form the signal peptide; that stretch reads MKVVSNFIFTILLTLNLSAA. An N-linked (GlcNAc...) asparagine glycan is attached at N16. Residues 42-62 traverse the membrane as a helical segment; that stretch reads VHSGATWAILGTTLCSFFGGL. N-linked (GlcNAc...) asparagine glycosylation occurs at N236. Residues 332-483 are disordered; it reads SAPESESDLN…QSITSSPGQS (152 aa). The span at 344–392 shows a compositional bias: low complexity; sequence TTSSIETSSYSSAATESSVVSESSSAVDSLTSSSLSSKSESSDVVSSTT. Over residues 393 to 414 the composition is skewed to polar residues; that stretch reads NIESSSTAIETTMNSESSTDAG. Residues 415-475 show a composition bias toward low complexity; sequence SSSISQSESS…SNALSSTEQS (61 aa). N-linked (GlcNAc...) asparagine glycosylation is found at N449, N488, N580, N585, N595, and N603. The span at 567 to 590 shows a compositional bias: low complexity; it reads DATTTTTTSTGGDNSTGGNESGSN. A disordered region spans residues 567–857; it reads DATTTTTTST…VANPVTTSTE (291 aa). Over residues 591–609 the composition is skewed to gly residues; the sequence is HGPGNGSTEGSGNGSGAGS. Repeat unit 1 spans residues 610–613; it reads NEGS. The tract at residues 610–753 is 7 X 4 AA repeats of N-E-G-S; the sequence is NEGSQSGPNN…GAGNGSNEGS (144 aa). 4 N-linked (GlcNAc...) asparagine glycosylation sites follow: N619, N631, N641, and N649. Composition is skewed to gly residues over residues 619–631 and 641–665; these read NGSG…GSNN and NGSG…GSGS. 4 repeat units span residues 666–669, 680–683, 690–693, and 698–701. Over residues 666-682 the composition is skewed to low complexity; that stretch reads NEGSQSGSGSQPGPNEG. Gly residues predominate over residues 699 to 725; sequence EGSGSGSGSGSNNGSGSGSQSGSGSGS. The N-linked (GlcNAc...) asparagine glycan is linked to N711. The span at 726–742 shows a compositional bias: low complexity; the sequence is QSGSESGSNSGSNEGSN. The stretch at 738 to 741 is repeat 6; sequence NEGS. The segment covering 743-801 has biased composition (gly residues); that stretch reads PGAGNGSNEGSGQGSGNGSEAGSGQGSGPNNGSGSGHNDGSGSGSNQGSNPGAGSGSGS. Residue N747 is glycosylated (N-linked (GlcNAc...) asparagine). Copy 7 of the repeat occupies 750-753; sequence NEGS. N-linked (GlcNAc...) asparagine glycosylation is found at N759 and N773. Residues 802–814 are compositionally biased toward low complexity; it reads ESGSKAGSHSGSN. Positions 817–829 are enriched in basic and acidic residues; sequence AKTDSIEGFHTES. Polar residues predominate over residues 841-851; sequence ATVTGNSVANP. N897 and N913 each carry an N-linked (GlcNAc...) asparagine glycan. N913 carries the GPI-anchor amidated asparagine lipid modification. A propeptide spans 914-937 (removed in mature form); sequence GSSIVTGGKSILFGLIVSMVVLFM.

It is found in the cell membrane. The protein localises to the secreted. Its subcellular location is the cell wall. Nonessential component of the hyphal cell wall. The polypeptide is Hyphally-regulated protein (HYR1) (Candida albicans (Yeast)).